The sequence spans 131 residues: Con-Ins Q1 (131 aa).

The first 24 residues, 1 to 24, serve as a signal peptide directing secretion; it reads MTTSSYFLLVALGLLLYLCQSSFG. 4 disulfide bridges follow: Cys-29-Cys-107, Cys-41-Cys-110, Cys-53-Cys-123, and Cys-109-Cys-114. A propeptide spans 59–92 (c peptide); that stretch reads LQGGTDDARKKRGRASLLRKRRGFLSMLKARAKR. The residue at position 118 (Glu-118) is a 4-carboxyglutamate; partial. Residue Ser-130 is modified to Serine amide.

The protein belongs to the insulin family. Heterodimer of A and B chains; disulfide-linked. As to expression, expressed by the venom gland.

The protein resides in the secreted. This venom insulin facilitates prey capture by rapidly inducing hypoglycemic shock. Intraperitoneal injection of this peptide into zebrafish lowers blood glucose with the same potency than human insulin. In vivo, when applied to water, this peptide reduces overall locomotor activity of zebrafish larvae, observed as a significant decrease in the percentage of time spent swimming and movement frequency. In Conus quercinus (Oak cone), this protein is Con-Ins Q1.